A 192-amino-acid polypeptide reads, in one-letter code: Molybdenum cofactor guanylyltransferase (192 aa).

GTP-binding positions include 10–12, Lys23, Asn51, Asp69, and Asp99; that span reads LAG. Mg(2+) is bound at residue Asp99.

It belongs to the MobA family. Monomer. Mg(2+) is required as a cofactor.

Its subcellular location is the cytoplasm. The catalysed reaction is Mo-molybdopterin + GTP + H(+) = Mo-molybdopterin guanine dinucleotide + diphosphate. Its function is as follows. Transfers a GMP moiety from GTP to Mo-molybdopterin (Mo-MPT) cofactor (Moco or molybdenum cofactor) to form Mo-molybdopterin guanine dinucleotide (Mo-MGD) cofactor. In Haemophilus influenzae (strain ATCC 51907 / DSM 11121 / KW20 / Rd), this protein is Molybdenum cofactor guanylyltransferase.